The primary structure comprises 361 residues: 3-dehydroquinate synthase (361 aa).

NAD(+)-binding positions include 72–77, 130–131, K142, and K151; these read SGEKEK and TT. Positions 184, 247, and 264 each coordinate Zn(2+).

Belongs to the sugar phosphate cyclases superfamily. Dehydroquinate synthase family. Co(2+) serves as cofactor. The cofactor is Zn(2+). NAD(+) is required as a cofactor.

The protein resides in the cytoplasm. The catalysed reaction is 7-phospho-2-dehydro-3-deoxy-D-arabino-heptonate = 3-dehydroquinate + phosphate. Its pathway is metabolic intermediate biosynthesis; chorismate biosynthesis; chorismate from D-erythrose 4-phosphate and phosphoenolpyruvate: step 2/7. Functionally, catalyzes the conversion of 3-deoxy-D-arabino-heptulosonate 7-phosphate (DAHP) to dehydroquinate (DHQ). This is 3-dehydroquinate synthase from Bacillus cereus (strain B4264).